The chain runs to 506 residues: Maturase K (506 aa).

It belongs to the intron maturase 2 family. MatK subfamily.

It is found in the plastid. The protein localises to the chloroplast. Functionally, usually encoded in the trnK tRNA gene intron. Probably assists in splicing its own and other chloroplast group II introns. This chain is Maturase K, found in Manihot esculenta (Cassava).